The following is a 138-amino-acid chain: Nucleoside diphosphate kinase (138 aa).

Residues Lys9, Phe57, Arg85, Thr91, Arg102, and Asn112 each contribute to the ATP site. His115 (pros-phosphohistidine intermediate) is an active-site residue.

The protein belongs to the NDK family. Homotetramer. Mg(2+) is required as a cofactor.

It localises to the cytoplasm. It catalyses the reaction a 2'-deoxyribonucleoside 5'-diphosphate + ATP = a 2'-deoxyribonucleoside 5'-triphosphate + ADP. The catalysed reaction is a ribonucleoside 5'-diphosphate + ATP = a ribonucleoside 5'-triphosphate + ADP. Its function is as follows. Major role in the synthesis of nucleoside triphosphates other than ATP. The ATP gamma phosphate is transferred to the NDP beta phosphate via a ping-pong mechanism, using a phosphorylated active-site intermediate. This is Nucleoside diphosphate kinase from Lawsonia intracellularis (strain PHE/MN1-00).